We begin with the raw amino-acid sequence, 318 residues long: Protease HtpX homolog (318 aa).

2 helical membrane-spanning segments follow: residues 6–26 (TAML…LIGG) and 28–48 (AGMM…YWNS). His-130 provides a ligand contact to Zn(2+). Glu-131 is an active-site residue. His-134 provides a ligand contact to Zn(2+). Transmembrane regions (helical) follow at residues 145–165 (ITAT…FFGG) and 173–193 (PLGF…AMLV). Residue Glu-202 participates in Zn(2+) binding. The interval 284 to 318 (NVSTGPVRAVNPTRKSRSVPNTGRGGSQPPRGPWS) is disordered.

It belongs to the peptidase M48B family. Zn(2+) serves as cofactor.

It is found in the cell inner membrane. This is Protease HtpX homolog from Rhizobium etli (strain CIAT 652).